We begin with the raw amino-acid sequence, 819 residues long: MPAGICGCCGALRPRYKRLVDNIFPEDPRDGLVKADMEKLTFYAVSAPEKLDRIGAYLAERLSRDVMRHRYGNVFIAMEALDQLLMACHSQSIKPFVESFLHMVAKLLESGEPKLQIYGTNSFVKFANIEEDTPSYHRRYDFFVSRFSAMCHSCHDDPEVRKEIRIAGIRGIQGVVRKTVNDELRATIWEPQHMDKIVPSLLFNMQKIEDTDSRTGPPASPTTGDKEENPGILAENCFRELLGRATYGNMNNAVKPVFAHLDHHKLWESNEFAVSCFKIIMYSIQAQYSHHVIQQILVHLDLHKKDSPRIRAGIVQVLLEAVAIAAKGSIGPTVLEVFNTLLKHLTLSVDFELGDRRSSAGSAVFSSSSTRESDERIVQNAIIQTIGFFGSNLPDYQRSEIMMFIMGKVPVFGSSPHMLDTSQLGDMGTKRIQIMLLRSLLMVTSGYKAKTIAAALPPAFLDPLLSPSLMEDCELRQLVLEILHNLIDRHDNRAKLRGIRIIPDVADLKIKREKISKQDVNFMKKHGQQLYRHIYLGCKEDDNVHKNYELLYTTLALVTIELANEEVVIDLIRVAIALQDIAITNEDNLQMFNRCGIMGMVAAYLNFLSQMIAVPAFCQHVSKVIETRNMDATYFLPEVIFRDKCSLPKSLDKHEKNQIFLTNKIAESLGGSGYNVEKLSMPYVPQVTDEDRLSRRKSIVDTISIQVDILSGSNTEDKVNTEEITFESLKKAIDNTGMEEQEKEKRRLVIEKFQKAPFEEIAAQCESKANLLHDKLAQILELTIRPPPSPSGTLTMTAGHAQYQSVPVYEMKFPDLCVY.

A disordered region spans residues 210–230 (DTDSRTGPPASPTTGDKEENP).

This sequence belongs to the EFR3 family. In terms of assembly, component of a phosphatidylinositol 4-kinase (PI4K) complex. Post-translationally, palmitoylated at its N-terminus, anchoring the protein to the plasma membrane.

Its subcellular location is the cell membrane. Its function is as follows. Component of a complex required to localize phosphatidylinositol 4-kinase (PI4K) to the plasma membrane. The complex acts as a regulator of phosphatidylinositol 4-phosphate (PtdIns(4)P) synthesis. In the complex, efr3a probably acts as the membrane-anchoring component. This chain is Protein EFR3 homolog A (efr3a), found in Xenopus laevis (African clawed frog).